The following is a 578-amino-acid chain: Vitelline membrane-like protein (578 aa).

An N-terminal signal peptide occupies residues Met-1 to Ser-21. The 45 X 8 AA approximate tandem repeats of [PS]-[AS]-Y-S-A-P-A-[AS] stretch occupies residues Gln-72–Ser-452. Disordered stretches follow at residues Ala-133–Pro-442 and Ser-487–Ser-514. The region spanning Ser-549–Tyr-578 is the VM domain.

In terms of assembly, interacts with Vm26Aa and Vm26Ab; forms part of a disulfide-linked network within the vitelline membrane of stage 10 egg chambers. Post-translationally, becomes part of a disulfide-linked network including other vitelline membrane proteins, including Vm26Aa and Vm26Ab, during vitelline membrane biogenesis and maturation. Sulfated by pip; probably involved in embryo dorsal-ventral axis determination. Sulfation by pip may occur on covalently bound glycosaminoglycans. In terms of tissue distribution, secreted into the perivitelline space and becomes stably incorporated into the vitelline membrane (at protein level). Expressed throughout the follicle cell layer of stage 10 egg chambers.

It is found in the secreted. The protein resides in the extracellular space. Its subcellular location is the extracellular matrix. Its function is as follows. Major early eggshell protein secreted by folicle cells into the perivitelline space and incorporated into the vitelline membrane. Localized sulfation by pip may be involved in embryo dorsal-ventral axis determination. This is Vitelline membrane-like protein from Drosophila melanogaster (Fruit fly).